Here is a 332-residue protein sequence, read N- to C-terminus: 2,3-diketo-L-gulonate reductase (332 aa).

His44 serves as the catalytic Proton donor. NAD(+) contacts are provided by residues 168–174, 224–225, and 304–306; these read ITMVDMS, WK, and GHE.

This sequence belongs to the LDH2/MDH2 oxidoreductase family. DlgD subfamily. Homodimer.

It localises to the cytoplasm. It catalyses the reaction 3-dehydro-L-gulonate + NAD(+) = 2,3-dioxo-L-gulonate + NADH + H(+). The enzyme catalyses 3-dehydro-L-gulonate + NADP(+) = 2,3-dioxo-L-gulonate + NADPH + H(+). Functionally, catalyzes the reduction of 2,3-diketo-L-gulonate in the presence of NADH, to form 3-keto-L-gulonate. This is 2,3-diketo-L-gulonate reductase from Salmonella paratyphi C (strain RKS4594).